The primary structure comprises 190 residues: Putative serine carboxypeptidase-like 54 (190 aa).

The N-terminal stretch at 1 to 25 (MATKTFSLPFLLIVCIFSQLSSTFG) is a signal peptide. Asparagine 58, asparagine 59, and asparagine 105 each carry an N-linked (GlcNAc...) asparagine glycan.

The protein belongs to the peptidase S10 family.

It localises to the secreted. The sequence is that of Putative serine carboxypeptidase-like 54 (SCPL54) from Arabidopsis thaliana (Mouse-ear cress).